A 337-amino-acid polypeptide reads, in one-letter code: Glyceraldehyde-3-phosphate dehydrogenase (337 aa).

Residues 12 to 13, Asp34, and Lys79 each bind NAD(+); that span reads RI. D-glyceraldehyde 3-phosphate is bound by residues 150 to 152, Thr181, 210 to 211, and Arg233; these read SCT and TG. Catalysis depends on Cys151, which acts as the Nucleophile. Asn315 provides a ligand contact to NAD(+).

It belongs to the glyceraldehyde-3-phosphate dehydrogenase family. As to quaternary structure, homotetramer.

It localises to the cytoplasm. The catalysed reaction is D-glyceraldehyde 3-phosphate + phosphate + NAD(+) = (2R)-3-phospho-glyceroyl phosphate + NADH + H(+). Its pathway is carbohydrate degradation; glycolysis; pyruvate from D-glyceraldehyde 3-phosphate: step 1/5. In Cochliobolus lunatus (Filamentous fungus), this protein is Glyceraldehyde-3-phosphate dehydrogenase (GPD).